The following is a 673-amino-acid chain: Acetate--CoA ligase [ADP-forming] II (673 aa).

Positions 9–45 constitute an ATP-grasp domain; sequence KALLEKYGIKTAKCIFCETEEQAVKAAKEIGFPVVMK. ATP is bound at residue 35 to 46; that stretch reads AKEIGFPVVMKV.

In the N-terminal section; belongs to the acetate CoA ligase beta subunit family. This sequence in the C-terminal section; belongs to the acetate CoA ligase alpha subunit family. In terms of assembly, homodimer.

It carries out the reaction acetate + ATP + CoA = acetyl-CoA + ADP + phosphate. Its activity is regulated as follows. Activity requires divalent metal cations. In terms of biological role, catalyzes the reversible conversion of a variety of acids to the corresponding acyl-CoA esters. Shows the highest activity with the aryl acids, indoleacetate and phenylacetate, as compared to acetate. In the reverse direction, phenylacetyl-CoA is the best substrate. Seems to be involved primarily in the degradation of aryl-CoA esters to the corresponding acids. Participates in the degradation of branched-chain amino acids via branched-chain-acyl-CoA esters. This chain is Acetate--CoA ligase [ADP-forming] II, found in Archaeoglobus fulgidus (strain ATCC 49558 / DSM 4304 / JCM 9628 / NBRC 100126 / VC-16).